Here is a 373-residue protein sequence, read N- to C-terminus: tRNA-specific 2-thiouridylase MnmA (373 aa).

Residues 12–19 (GMSGGVDS) and M38 each bind ATP. Residues 98 to 100 (NPD) are interaction with target base in tRNA. C103 acts as the Nucleophile in catalysis. An intrachain disulfide couples C103 to C200. Position 127 (G127) interacts with ATP. The interval 150–152 (KDQ) is interaction with tRNA. C200 serves as the catalytic Cysteine persulfide intermediate. An interaction with tRNA region spans residues 312–313 (RY).

This sequence belongs to the MnmA/TRMU family.

The protein resides in the cytoplasm. It catalyses the reaction S-sulfanyl-L-cysteinyl-[protein] + uridine(34) in tRNA + AH2 + ATP = 2-thiouridine(34) in tRNA + L-cysteinyl-[protein] + A + AMP + diphosphate + H(+). In terms of biological role, catalyzes the 2-thiolation of uridine at the wobble position (U34) of tRNA, leading to the formation of s(2)U34. This chain is tRNA-specific 2-thiouridylase MnmA, found in Streptococcus pyogenes serotype M12 (strain MGAS2096).